The following is a 219-amino-acid chain: Small ribosomal subunit protein uS3 (219 aa).

In terms of domain architecture, KH type-2 spans isoleucine 38 to lysine 106.

The protein belongs to the universal ribosomal protein uS3 family. As to quaternary structure, part of the 30S ribosomal subunit. Forms a tight complex with proteins S10 and S14.

Functionally, binds the lower part of the 30S subunit head. Binds mRNA in the 70S ribosome, positioning it for translation. This is Small ribosomal subunit protein uS3 from Latilactobacillus sakei subsp. sakei (strain 23K) (Lactobacillus sakei subsp. sakei).